Here is a 123-residue protein sequence, read N- to C-terminus: uncharacterized protein (123 aa).

The chain crosses the membrane as a helical span at residues 14–34 (VVLKITAVVCSVFSIRVLILA).

It is found in the membrane. This is an uncharacterized protein from Saccharomyces cerevisiae (strain ATCC 204508 / S288c) (Baker's yeast).